Consider the following 133-residue polypeptide: Fluoride-specific ion channel FluC (133 aa).

4 helical membrane passes run 3–23 (AVVW…GSGL), 41–61 (WGTL…LIWV), 76–96 (IVGL…CLVF), and 103–123 (LIVG…VFLG). 2 residues coordinate Na(+): Gly81 and Thr84.

Belongs to the fluoride channel Fluc/FEX (TC 1.A.43) family.

The protein resides in the cell inner membrane. The catalysed reaction is fluoride(in) = fluoride(out). With respect to regulation, na(+) is not transported, but it plays an essential structural role and its presence is essential for fluoride channel function. Fluoride-specific ion channel. Important for reducing fluoride concentration in the cell, thus reducing its toxicity. This Xylella fastidiosa (strain M23) protein is Fluoride-specific ion channel FluC.